Here is a 407-residue protein sequence, read N- to C-terminus: Argininosuccinate synthase (407 aa).

ATP is bound by residues 16 to 24 (AYSGGLDTS) and Ala44. L-citrulline contacts are provided by Tyr96 and Ser101. Gly126 contributes to the ATP binding site. L-aspartate-binding residues include Thr128, Asn132, and Asp133. Residue Asn132 participates in L-citrulline binding. L-citrulline-binding residues include Arg136, Ser185, Ser194, Glu270, and Tyr282.

It belongs to the argininosuccinate synthase family. Type 1 subfamily. Homotetramer.

The protein resides in the cytoplasm. It catalyses the reaction L-citrulline + L-aspartate + ATP = 2-(N(omega)-L-arginino)succinate + AMP + diphosphate + H(+). It functions in the pathway amino-acid biosynthesis; L-arginine biosynthesis; L-arginine from L-ornithine and carbamoyl phosphate: step 2/3. In Shewanella frigidimarina (strain NCIMB 400), this protein is Argininosuccinate synthase.